A 223-amino-acid polypeptide reads, in one-letter code: DNA mismatch repair protein MutH (223 aa).

Belongs to the MutH family.

Its subcellular location is the cytoplasm. Its function is as follows. Sequence-specific endonuclease that cleaves unmethylated GATC sequences. It is involved in DNA mismatch repair. This Shewanella baltica (strain OS185) protein is DNA mismatch repair protein MutH.